Reading from the N-terminus, the 252-residue chain is Transmembrane ascorbate-dependent reductase CYB561 (252 aa).

Met-1 carries the post-translational modification N-acetylmethionine. The Cytoplasmic segment spans residues 1-17 (MEGPASPARAPGALPYY). Residues 18–38 (VAFSQLLGLIVVAMTGAWLGM) form a helical membrane-spanning segment. The Cytochrome b561 domain maps to 20-221 (FSQLLGLIVV…FATVILYILT (202 aa)). Residues 39-52 (YRGGIAWESALQFN) are Vesicular-facing. A helical transmembrane segment spans residues 53–73 (VHPLCMIIGLVFLQGDALLVY). Heme b contacts are provided by His-54, Arg-74, and Lys-81. Topologically, residues 74-86 (RVFRNEAKRTTKV) are cytoplasmic. Positions 81 and 85 each coordinate L-ascorbate. The chain crosses the membrane as a helical span at residues 87–107 (LHGLLHVFAFVIALVGLVAVF). Heme b-binding positions include His-88, 117–120 (DLYS), and His-122. At 108-125 (EHHRKKGYADLYSLHSWC) the chain is on the vesicular side. The helical transmembrane segment at 126-146 (GILVFALFFAQWLVGFSFFLF) threads the bilayer. Topologically, residues 147–159 (PGASFSLRSRYRP) are cytoplasmic. Arg-154 lines the L-ascorbate pocket. Residues 160-180 (QHVFFGAAIFLLSVATALLGL) form a helical membrane-spanning segment. Residues His-161 and Glu-182 each contribute to the heme b site. Topologically, residues 181–199 (KEALLFELGTKYSMFEPEG) are vesicular. Residues 200-220 (VLANVLGLLLATFATVILYIL) traverse the membrane as a helical segment. Over 221–252 (TRADWKRPLQAEEQALSMDFKTLTEGDSPSSQ) the chain is Cytoplasmic. Lys-226 contacts heme b. Ser-248 and Ser-250 each carry phosphoserine.

Requires heme b as cofactor. As to expression, expressed in the adrenal medulla and all brain regions, but not in visceral organs.

Its subcellular location is the cytoplasmic vesicle. The protein resides in the secretory vesicle. The protein localises to the chromaffin granule membrane. The enzyme catalyses monodehydro-L-ascorbate radical(out) + L-ascorbate(in) = monodehydro-L-ascorbate radical(in) + L-ascorbate(out). In terms of biological role, transmembrane reductase that uses ascorbate as an electron donor in the cytoplasm and transfers electrons across membranes to reduce monodehydro-L-ascorbate radical in the lumen of secretory vesicles. It is therefore involved the regeneration and homeostasis within secretory vesicles of ascorbate which in turn provides reducing equivalents needed to support the activity of intravesicular enzymes. The sequence is that of Transmembrane ascorbate-dependent reductase CYB561 (CYB561) from Bos taurus (Bovine).